Here is a 311-residue protein sequence, read N- to C-terminus: Putative prophage capsid protein YqbE (311 aa).

It belongs to the encapsulin family. Family 3 subfamily.

Possibly a prophage capsid protein. In Bacillus subtilis (strain 168), this protein is Putative prophage capsid protein YqbE (yqbE).